The primary structure comprises 1111 residues: Kinesin-like protein KIP1 (1111 aa).

A compositionally biased stretch (polar residues) spans 1 to 11 (MARSSLPNRRT). A disordered region spans residues 1-34 (MARSSLPNRRTAQFEANKRRTIAHAPSPSLSNGM). The Kinesin motor domain occupies 52–410 (NIHVYVRCRS…LEYATRAKSI (359 aa)). Position 141–148 (141–148 (GQTGTGKT)) interacts with ATP. Coiled coils occupy residues 424–510 (TCLK…IIQN), 648–670 (KDLN…DIKS), 710–780 (KLIK…DQDI), and 808–828 (HNAE…TNDL). Positions 1007-1016 (AENKSKDDTS) are enriched in basic and acidic residues. The interval 1007–1111 (AENKSKDDTS…DILQNKKLHQ (105 aa)) is disordered. 2 stretches are compositionally biased toward polar residues: residues 1017–1038 (NSRT…QFSP) and 1057–1082 (SINS…SQNN).

This sequence belongs to the TRAFAC class myosin-kinesin ATPase superfamily. Kinesin family. BimC subfamily. As to quaternary structure, might be dimeric.

It localises to the cytoplasm. The protein resides in the cytoskeleton. Its subcellular location is the spindle. Its function is as follows. Required for assembly of the mitotic spindle. Interacts with spindle microtubules to produce an outwardly directed force acting upon the poles. Following spindle assembly, CIN8 and KIP1 apparently act to oppose a force that draws separated poles back together. This force seems to be mediate by KAR3. This is Kinesin-like protein KIP1 (KIP1) from Saccharomyces cerevisiae (strain ATCC 204508 / S288c) (Baker's yeast).